The following is a 569-amino-acid chain: Proton-coupled zinc antiporter SLC30A9, mitochondrial (569 aa).

The N-terminal 68 residues, 1 to 68 (MLPGLAAAAA…IGTLSQVKLY (68 aa)), are a transit peptide targeting the mitochondrion. 5 helical membrane passes run 240–260 (VVMV…LAWI), 315–335 (GVGI…MGLL), 343–363 (LLWA…TLLV), 393–413 (VILL…TCMG), and 425–445 (SLGS…LIYT). The short motif at 463–467 (LTELL) is the LXXLL motif element.

Belongs to the cation diffusion facilitator (CDF) transporter (TC 2.A.4) family. SLC30A subfamily. In terms of assembly, interacts with GRIP1, ESR1, AR and CTNNB1.

The protein resides in the mitochondrion membrane. The protein localises to the nucleus. It is found in the endoplasmic reticulum. The catalysed reaction is Zn(2+)(in) + 2 H(+)(out) = Zn(2+)(out) + 2 H(+)(in). In terms of biological role, mitochondrial proton-coupled zinc ion antiporter mediating the export of zinc from the mitochondria and involved in zinc homeostasis, zinc mobilization as well as mitochondrial morphology and health. In nucleus, functions as a secondary coactivator for nuclear receptors by cooperating with p160 coactivators subtypes. Plays a role in transcriptional activation of Wnt-responsive genes. This is Proton-coupled zinc antiporter SLC30A9, mitochondrial (SLC30A9) from Pongo abelii (Sumatran orangutan).